The following is a 574-amino-acid chain: Sulfate adenylyltransferase (574 aa).

Positions 1–169 (MANPPHGGVL…IEAINKLNHY (169 aa)) are N-terminal. The interval 170-394 (DYVALRYTPA…LRESSPPRHT (225 aa)) is catalytic. Gln-197 is a sulfate binding site. Residues 197 to 200 (QTRN) and 291 to 294 (GRDH) each bind ATP. Residues Thr-198, Arg-199, and Asn-200 contribute to the active site. Residue Arg-199 coordinates sulfate. Ala-295 contributes to the sulfate binding site. Val-333 is a binding site for ATP. An allosteric regulation domain; adenylyl-sulfate kinase-like region spans residues 395–574 (QGFTIFLTGY…LETEGFFDRS (180 aa)). Residues 434–437 (DTVR), Arg-451, 477–478 (IA), and Arg-516 contribute to the 3'-phosphoadenylyl sulfate site.

This sequence in the N-terminal section; belongs to the sulfate adenylyltransferase family. In the C-terminal section; belongs to the APS kinase family. As to quaternary structure, homohexamer. Dimer of trimers.

It is found in the cytoplasm. The enzyme catalyses sulfate + ATP + H(+) = adenosine 5'-phosphosulfate + diphosphate. Its pathway is sulfur metabolism; hydrogen sulfide biosynthesis; sulfite from sulfate: step 1/3. Allosterically inhibited by 3'-phosphoadenosine 5'-phosphosulfate (PAPS). Functionally, catalyzes the first intracellular reaction of sulfate assimilation, forming adenosine-5'-phosphosulfate (APS) from inorganic sulfate and ATP. Plays an important role in sulfate activation as a component of the biosynthesis pathway of sulfur-containing amino acids. The sequence is that of Sulfate adenylyltransferase from Neosartorya fischeri (strain ATCC 1020 / DSM 3700 / CBS 544.65 / FGSC A1164 / JCM 1740 / NRRL 181 / WB 181) (Aspergillus fischerianus).